Consider the following 155-residue polypeptide: Protein-export protein SecB (155 aa).

It belongs to the SecB family. As to quaternary structure, homotetramer, a dimer of dimers. One homotetramer interacts with 1 SecA dimer.

Its subcellular location is the cytoplasm. In terms of biological role, one of the proteins required for the normal export of preproteins out of the cell cytoplasm. It is a molecular chaperone that binds to a subset of precursor proteins, maintaining them in a translocation-competent state. It also specifically binds to its receptor SecA. This chain is Protein-export protein SecB, found in Citrobacter koseri (strain ATCC BAA-895 / CDC 4225-83 / SGSC4696).